Reading from the N-terminus, the 326-residue chain is 4-hydroxythreonine-4-phosphate dehydrogenase (326 aa).

Substrate contacts are provided by histidine 134 and threonine 135. A divalent metal cation is bound by residues histidine 164, histidine 209, and histidine 264. The substrate site is built by lysine 272, asparagine 281, and arginine 290.

Belongs to the PdxA family. Homodimer. Zn(2+) serves as cofactor. Mg(2+) is required as a cofactor. It depends on Co(2+) as a cofactor.

The protein localises to the cytoplasm. The catalysed reaction is 4-(phosphooxy)-L-threonine + NAD(+) = 3-amino-2-oxopropyl phosphate + CO2 + NADH. It functions in the pathway cofactor biosynthesis; pyridoxine 5'-phosphate biosynthesis; pyridoxine 5'-phosphate from D-erythrose 4-phosphate: step 4/5. Functionally, catalyzes the NAD(P)-dependent oxidation of 4-(phosphooxy)-L-threonine (HTP) into 2-amino-3-oxo-4-(phosphooxy)butyric acid which spontaneously decarboxylates to form 3-amino-2-oxopropyl phosphate (AHAP). The chain is 4-hydroxythreonine-4-phosphate dehydrogenase from Colwellia psychrerythraea (strain 34H / ATCC BAA-681) (Vibrio psychroerythus).